A 514-amino-acid chain; its full sequence is UDP-N-acetylmuramate--L-alanine ligase (514 aa).

127 to 133 lines the ATP pocket; sequence GTHGKTT. Low complexity predominate over residues 495–505; that stretch reads IGGTIPDIPGG. The tract at residues 495–514 is disordered; the sequence is IGGTIPDIPGGSTPDASAAG.

The protein belongs to the MurCDEF family.

Its subcellular location is the cytoplasm. The enzyme catalyses UDP-N-acetyl-alpha-D-muramate + L-alanine + ATP = UDP-N-acetyl-alpha-D-muramoyl-L-alanine + ADP + phosphate + H(+). It functions in the pathway cell wall biogenesis; peptidoglycan biosynthesis. In terms of biological role, cell wall formation. In Salinispora tropica (strain ATCC BAA-916 / DSM 44818 / JCM 13857 / NBRC 105044 / CNB-440), this protein is UDP-N-acetylmuramate--L-alanine ligase.